The chain runs to 938 residues: Catenin delta-1 (938 aa).

Met1 bears the N-acetylmethionine mark. The segment at 1 to 357 (MDDSEVESTA…ASLDSLRKGM (357 aa)) is necessary and sufficient for interaction with CCDC85B. Ser4 bears the Phosphoserine mark. Residues 10–46 (ASILASVKEQEAQFEKLTRALEEERRHVSAQLERVRV) adopt a coiled-coil conformation. At Ser47 the chain carries Phosphoserine. Thr59 is subject to Phosphothreonine. A Phosphotyrosine; by FYN modification is found at Tyr112. Ser125 bears the Phosphoserine mark. Tyr217 and Tyr221 each carry phosphotyrosine. The residue at position 225 (Ser225) is a Phosphoserine. Phosphotyrosine is present on Tyr228. Phosphoserine occurs at positions 230 and 252. The residue at position 257 (Tyr257) is a Phosphotyrosine. Residues Ser268 and Ser269 each carry the phosphoserine modification. A Phosphotyrosine modification is found at Tyr280. Position 288 is a phosphoserine (Ser288). Residue Tyr291 is modified to Phosphotyrosine. The residue at position 300 (Ser300) is a Phosphoserine. Residue Thr304 is modified to Phosphothreonine. A phosphoserine mark is found at Ser320, Ser346, Ser349, and Ser352. ARM repeat units follow at residues 358-395 (PPPS…HLCY), 398-437 (DKVK…NISF), 441-475 (QDNK…ITGT), and 476-516 (LWNL…NEDC). A Glycyl lysine isopeptide (Lys-Gly) (interchain with G-Cter in SUMO2) cross-link involves residue Lys421. Residue Lys517 forms a Glycyl lysine isopeptide (Lys-Gly) (interchain with G-Cter in SUMO2) linkage. ARM repeat units lie at residues 534-573 (LRNV…DSDS), 583-624 (LRNL…AKKG), 653-693 (ARGY…NLCA), 700-739 (RYIR…NLAV), 740-780 (DARN…SILN), and 781-826 (TINE…ALVL). Ser617 is subject to Phosphoserine. The Nuclear localization signal (NLS) motif lies at 622–629 (KKGKDEWF). Phosphoserine is present on Ser713. Phosphoserine occurs at positions 811, 847, 857, 859, 861, and 864. Residues 855–938 (NASRSQSSHS…LKGAPLMQKI (84 aa)) are disordered. Position 865 is a phosphotyrosine (Tyr865). Ser868 is subject to Phosphoserine. Phosphothreonine is present on Thr869. Residues 875-888 (RNQKSDKKPDREEI) are compositionally biased toward basic and acidic residues. The residue at position 879 (Ser879) is a Phosphoserine. Lys882 is covalently cross-linked (Glycyl lysine isopeptide (Lys-Gly) (interchain with G-Cter in SUMO2)). Polar residues predominate over residues 892–908 (NMGSNTKSLDNNYSTLN). A Phosphoserine modification is found at Ser899. Tyr904 bears the Phosphotyrosine mark. Thr906 and Thr916 each carry phosphothreonine. Positions 909-922 (ERGDHNRTLDRSGD) are enriched in basic and acidic residues. Phosphoserine is present on Ser920.

The protein belongs to the beta-catenin family. Belongs to a multiprotein cell-cell adhesion complex that also contains E-cadherin/CDH1, alpha-catenin/CTNNA1, beta-catenin/CTNNB1, and gamma-catenin/JUP. Binds to the C-terminal fragment of PSEN1 and mutually competes for CDH1. Interacts with ZBTB33. Interacts with GLIS2. Interacts with FER. Interacts with NANOS1 (via N-terminal region). Interacts (via N-terminus) with GNA12; the interaction regulates CDH1-mediated cell-cell adhesion. Interacts with GNA13. Component of a cadherin:catenin adhesion complex composed of at least of CDH26, beta-catenin/CTNNB1, alpha-catenin/CTNNA1 and p120 catenin/CTNND1. Interacts with CCDC85B. Interacts with PLPP3; negatively regulates the PLPP3-mediated stabilization of CTNNB1. Interacts with DSG3; the interaction facilitates DSG3 localization and retention at cell-cell junctions. Interacts with CTNND1/p120-catenin; the interaction controls CADH5 endocytosis. In terms of processing, phosphorylated by FER and other protein-tyrosine kinases. Phosphorylated at Ser-288 by PAK5. Dephosphorylated by PTPRJ. In terms of tissue distribution, expressed in basal keratinocytes (at protein level).

The protein localises to the cell junction. Its subcellular location is the adherens junction. It localises to the cytoplasm. It is found in the nucleus. The protein resides in the cell membrane. In terms of biological role, key regulator of cell-cell adhesion that associates with and regulates the cell adhesion properties of both C-, E- and N-cadherins, being critical for their surface stability. Promotes localization and retention of DSG3 at cell-cell junctions, via its interaction with DSG3. Beside cell-cell adhesion, regulates gene transcription through several transcription factors including ZBTB33/Kaiso2 and GLIS2, and the activity of Rho family GTPases and downstream cytoskeletal dynamics. Implicated both in cell transformation by SRC and in ligand-induced receptor signaling through the EGF, PDGF, CSF-1 and ERBB2 receptors. The protein is Catenin delta-1 (Ctnnd1) of Mus musculus (Mouse).